The chain runs to 170 residues: MTGVDEILNYQRNPDDDYYALLGCDENSTVEQITAEYKILALQHHPDKNDGEKEAEMKFQKLKEAKEILCDPSKRALYDKWRRSGIAMGFKQWLGMKDHVQQSMHWSKPNTKDRMLEGDGSKPSGPSSLGPSNPATRRASEGGAALWGRWGTGNQEPPSEVLSKFRNYEI.

The J domain maps to 17–82 (DYYALLGCDE…SKRALYDKWR (66 aa)). Positions 101-170 (QQSMHWSKPN…VLSKFRNYEI (70 aa)) are disordered. The segment covering 110-120 (NTKDRMLEGDG) has biased composition (basic and acidic residues). A compositionally biased stretch (low complexity) spans 121–134 (SKPSGPSSLGPSNP).

The protein is J domain-containing protein (jdp) of Bombyx mori (Silk moth).